A 507-amino-acid polypeptide reads, in one-letter code: MVTIRADEISNIIRERIEQYNREVKIVNTGTVLQVGDGIARIHGLDEVMAGELVEFEEGTIGIALNLESNNVGVVLMGDGLMIQEGSSVKATGKIAQIPVSEAYLGRVINALAKPIDGWGEISASESRLIESPAPGIISRRSVYEPLQTGLIAIDSMIPIGRGQRELIFGDRQTGKTAVATDTILNQQGQNVICVYVAIGQKASSVAQVVTTFQERGAMEYTIVVAETADSPATLQYLAPYTGAALAEYFMYRERHTLIIYDDLSKQAQAYRQMSLLLRRPPGREAYPGDVFYLHSRLLERAAKSSSQLGEGSMTALPIVETQSGDVSAYIPTNVISITDGQIFLSADLFNAGIRPAINVGISVSRVGSAAQIKAMKQVAGKSKLELAQFAELEAFAQFASDLDKATQNQLARGQRLRELLKQSQSAPLTVAEQISTIYTGTNGYLDSLEIGQVRKFLVELRTYLKTNKPQFQEIISSTKTFTEEAETLLKDAIQDQMERFRLQEQL.

ATP is bound at residue 170–177 (GDRQTGKT).

It belongs to the ATPase alpha/beta chains family. F-type ATPases have 2 components, CF(1) - the catalytic core - and CF(0) - the membrane proton channel. CF(1) has five subunits: alpha(3), beta(3), gamma(1), delta(1), epsilon(1). CF(0) has four main subunits: a, b, b' and c.

The protein resides in the plastid. It localises to the chloroplast thylakoid membrane. The enzyme catalyses ATP + H2O + 4 H(+)(in) = ADP + phosphate + 5 H(+)(out). In terms of biological role, produces ATP from ADP in the presence of a proton gradient across the membrane. The alpha chain is a regulatory subunit. This Gossypium barbadense (Sea Island cotton) protein is ATP synthase subunit alpha, chloroplastic.